Consider the following 201-residue polypeptide: Cytochrome c oxidase assembly protein CtaG (201 aa).

The Cytoplasmic portion of the chain corresponds to 1-13 (MTDQGENEKKQRR). The chain crosses the membrane as a helical; Signal-anchor for type II membrane protein span at residues 14 to 36 (SNATIAVACLSFFVCMIGAAYAS). At 37–201 (VPLYRIFCQV…KAVGSTRNGG (165 aa)) the chain is on the periplasmic side.

The protein belongs to the COX11/CtaG family.

The protein localises to the cell inner membrane. Its function is as follows. Exerts its effect at some terminal stage of cytochrome c oxidase synthesis, probably by being involved in the insertion of the copper B into subunit I. This Brucella suis (strain ATCC 23445 / NCTC 10510) protein is Cytochrome c oxidase assembly protein CtaG.